A 457-amino-acid chain; its full sequence is Probable xyloglucan 6-xylosyltransferase 5 (457 aa).

Positions Met1–Gly40 are disordered. The Cytoplasmic portion of the chain corresponds to Met1–Lys51. Residues Asn26–Leu37 are compositionally biased toward gly residues. A helical; Signal-anchor for type II membrane protein transmembrane segment spans residues Ile52–Asn72. Over Leu73–Asn457 the chain is Lumenal. Residues Arg97–Asn116 are disordered. Residues Asp101–Glu110 are compositionally biased toward acidic residues. Asn116 and Asn432 each carry an N-linked (GlcNAc...) asparagine glycan.

The protein belongs to the glycosyltransferase 34 family. In terms of assembly, interacts with XXT2 and CSLC4. Interacts with FUT1 and XLT2. As to expression, highly expressed in roots, stems and cauline leaves, and at lower levels in rosette leaves, flowers and siliques.

It localises to the golgi apparatus membrane. It carries out the reaction Transfers an alpha-D-xylosyl residue from UDP-D-xylose to a glucose residue in xyloglucan, forming an alpha-(1-&gt;6)-D-xylosyl-D-glucose linkage.. Functionally, probable xyloglucan xylosyltransferase involved in the biosynthesis of xyloglucan in roots. May act in association with XXT1 and XXT2. Associates with other xyloglucan-synthesizing enzymes to form multiprotein complexes for xyloglucan synthesis in the Golgi. This chain is Probable xyloglucan 6-xylosyltransferase 5, found in Arabidopsis thaliana (Mouse-ear cress).